The sequence spans 125 residues: UPF0102 protein PA4424 (125 aa).

This sequence belongs to the UPF0102 family.

The protein is UPF0102 protein PA4424 of Pseudomonas aeruginosa (strain ATCC 15692 / DSM 22644 / CIP 104116 / JCM 14847 / LMG 12228 / 1C / PRS 101 / PAO1).